The primary structure comprises 677 residues: Methionine--tRNA ligase (677 aa).

The 'HIGH' region signature appears at 14 to 24; it reads PYANGAIHLGH. Cysteine 145, cysteine 148, cysteine 158, and cysteine 161 together coordinate Zn(2+). The 'KMSKS' region motif lies at 330–334; sequence KMSKS. Lysine 333 provides a ligand contact to ATP. The tRNA-binding domain occupies 576–677; that stretch reads DFAKVDLRVA…EGALPGMRVM (102 aa).

It belongs to the class-I aminoacyl-tRNA synthetase family. MetG type 1 subfamily. Homodimer. It depends on Zn(2+) as a cofactor.

The protein resides in the cytoplasm. It catalyses the reaction tRNA(Met) + L-methionine + ATP = L-methionyl-tRNA(Met) + AMP + diphosphate. In terms of biological role, is required not only for elongation of protein synthesis but also for the initiation of all mRNA translation through initiator tRNA(fMet) aminoacylation. The sequence is that of Methionine--tRNA ligase from Saccharophagus degradans (strain 2-40 / ATCC 43961 / DSM 17024).